We begin with the raw amino-acid sequence, 478 residues long: Chromosomal replication initiator protein DnaA (478 aa).

Residues 1-71 (MKEFWQTCVS…EALAAEWFQR (71 aa)) are domain I, interacts with DnaA modulators. Residues 71–140 (RPVQVAFELP…DAAGVVYERS (70 aa)) are domain II. The tract at residues 141 to 357 (RLNTDLTFDN…GALRKVLAYA (217 aa)) is domain III, AAA+ region. ATP is bound by residues G185, G187, K188, and T189. Residues 358–478 (RFHGRDVLSV…LHVLEQTLKG (121 aa)) are domain IV, binds dsDNA.

This sequence belongs to the DnaA family. As to quaternary structure, oligomerizes as a right-handed, spiral filament on DNA at oriC.

It localises to the cytoplasm. Its function is as follows. Plays an essential role in the initiation and regulation of chromosomal replication. ATP-DnaA binds to the origin of replication (oriC) to initiate formation of the DNA replication initiation complex once per cell cycle. Binds the DnaA box (a 9 base pair repeat at the origin) and separates the double-stranded (ds)DNA. Forms a right-handed helical filament on oriC DNA; dsDNA binds to the exterior of the filament while single-stranded (ss)DNA is stabiized in the filament's interior. The ATP-DnaA-oriC complex binds and stabilizes one strand of the AT-rich DNA unwinding element (DUE), permitting loading of DNA polymerase. After initiation quickly degrades to an ADP-DnaA complex that is not apt for DNA replication. Binds acidic phospholipids. In Bordetella petrii (strain ATCC BAA-461 / DSM 12804 / CCUG 43448), this protein is Chromosomal replication initiator protein DnaA.